Consider the following 348-residue polypeptide: Phosphatidylglycerophosphate phosphatase 1, chloroplastic/mitochondrial (348 aa).

A chloroplast and mitochondrion-targeting transit peptide spans 1 to 58; sequence MQTPSMAASTTSYYPIPKSFLLSPPRHKRNPNLISCSTKPICSPPPPSSSSSSPLQTT. A disordered region spans residues 17–67; the sequence is PKSFLLSPPRHKRNPNLISCSTKPICSPPPPSSSSSSPLQTTTTHRSQKQN. Over residues 55-67 the composition is skewed to polar residues; sequence LQTTTTHRSQKQN. Positions 184 to 188 match the Phosphoryl acceptor motif; it reads DKDNT.

This sequence belongs to the HAD-like hydrolase superfamily. Requires Mg(2+) as cofactor. Mainly expressed in inflorescences (especially in pollen) and, to a lower extent, in leaves, stems and siliques, as well as, at low levels, in roots. Mostly expressed in hypocotyl, vasculatures, trichomes, guard cells and stigmas.

The protein resides in the plastid. It is found in the chloroplast. It localises to the mitochondrion. It catalyses the reaction a 1,2-diacyl-sn-glycero-3-phospho-(1'-sn-glycero-3'-phosphate) + H2O = a 1,2-diacyl-sn-glycero-3-phospho-(1'-sn-glycerol) + phosphate. Its pathway is phospholipid metabolism; phosphatidylglycerol biosynthesis; phosphatidylglycerol from CDP-diacylglycerol: step 2/2. Functionally, phosphatidylglycerophosphate (PGP) phosphatase involved in the biosynthesis of phosphatidylglycerol (PG), a phosphoglycerolipid predominantly present in chloroplastic thylakoid membranes and which has important photosynthetic function; seems to use PGP 34:3, PGP 34:2 and PGP 34:1 as substrates. Required for thylakoid membranes development and chloroplast function. Necessary for normal cell growth. Required for root growth and columella cells organization. The polypeptide is Phosphatidylglycerophosphate phosphatase 1, chloroplastic/mitochondrial (Arabidopsis thaliana (Mouse-ear cress)).